A 427-amino-acid polypeptide reads, in one-letter code: Phosphatase PSR1 (427 aa).

2 S-palmitoyl cysteine lipidation sites follow: Cys9 and Cys10. Polar residues predominate over residues 14–34; the sequence is TTQSNSNSAYRQQQSSSLNKN. The interval 14–223 is disordered; that stretch reads TTQSNSNSAY…SNDADDEDDE (210 aa). The segment covering 35–48 has biased composition (basic residues); the sequence is RSVKHSNTKSRTRG. Residues 49 to 80 show a composition bias toward polar residues; sequence VHQTNSPPSKTNSAATFSSTERSTGKSGISTN. Positions 104-118 are enriched in basic and acidic residues; it reads KVEKRISKDDLYEEK. Ser110 carries the post-translational modification Phosphoserine. Positions 119 to 130 are enriched in acidic residues; it reads YEVDEDEEIDDE. Residues 131–151 show a composition bias toward basic and acidic residues; the sequence is DNRRSRGIVQEKGDAVKDTSR. A Glycyl lysine isopeptide (Lys-Gly) (interchain with G-Cter in ubiquitin) cross-link involves residue Lys154. The segment covering 155 to 183 has biased composition (low complexity); it reads QQQQQQQQSQPQPQPQSQSQSQSQSQSQQ. Residues 184–214 show a composition bias toward polar residues; sequence RGPTVQVSSDHLIQDMNLSRVSSSSQASETS. The FCP1 homology domain occupies 253–411; the sequence is STKGKKCLIL…LDIIPLLEDL (159 aa).

As to quaternary structure, interacts with WHI2.

Its subcellular location is the cell membrane. Has phosphatase activity in vitro. Involved in the response to sodium and lithium ion stress (but not to potassium or sorbitol stress) by inducing transcription of the sodium pump ENA1/PMR2. Acts through a calcineurin-independent pathway and is functionally redundant with PSR2. Also involved in the general stress response; acts together with WHI2 to activate stress response element (STRE)-mediated gene expression, possibly through dephosphorylation of MSN2. The sequence is that of Phosphatase PSR1 (PSR1) from Saccharomyces cerevisiae (strain ATCC 204508 / S288c) (Baker's yeast).